The primary structure comprises 84 residues: Small ribosomal subunit protein bS20 (84 aa).

This sequence belongs to the bacterial ribosomal protein bS20 family.

Its function is as follows. Binds directly to 16S ribosomal RNA. The chain is Small ribosomal subunit protein bS20 from Bacteroides thetaiotaomicron (strain ATCC 29148 / DSM 2079 / JCM 5827 / CCUG 10774 / NCTC 10582 / VPI-5482 / E50).